The chain runs to 388 residues: Putative [LysW]-aminoadipate semialdehyde/glutamate semialdehyde transaminase (388 aa).

Pyridoxal 5'-phosphate is bound by residues 100–101 (GT) and Phe-127. Residue Arg-130 coordinates substrate. 211 to 214 (DEIQ) lines the pyridoxal 5'-phosphate pocket. Lys-240 carries the post-translational modification N6-(pyridoxal phosphate)lysine. Ser-268 contributes to the substrate binding site. Thr-269 contributes to the pyridoxal 5'-phosphate binding site.

It belongs to the class-III pyridoxal-phosphate-dependent aminotransferase family. LysJ subfamily. As to quaternary structure, homodimer. It depends on pyridoxal 5'-phosphate as a cofactor.

Its subcellular location is the cytoplasm. The catalysed reaction is [amino-group carrier protein]-C-terminal-gamma-(L-lysyl)-L-glutamate + 2-oxoglutarate = [amino-group carrier protein]-C-terminal-N-(1-carboxy-5-oxopentan-1-yl)-L-glutamine + L-glutamate. The enzyme catalyses [amino-group carrier protein]-C-terminal-gamma-(L-ornithyl)-L-glutamate + 2-oxoglutarate = [amino-group carrier protein]-C-terminal-gamma-(L-glutamyl-5-semialdehyde)-L-glutamate + L-glutamate. It functions in the pathway amino-acid biosynthesis; L-lysine biosynthesis via AAA pathway; L-lysine from L-alpha-aminoadipate (Thermus route): step 4/5. It participates in amino-acid biosynthesis; L-arginine biosynthesis. Functionally, involved in both the arginine and lysine biosynthetic pathways. The sequence is that of Putative [LysW]-aminoadipate semialdehyde/glutamate semialdehyde transaminase from Aeropyrum pernix (strain ATCC 700893 / DSM 11879 / JCM 9820 / NBRC 100138 / K1).